A 211-amino-acid polypeptide reads, in one-letter code: Probable calcium-binding protein CML11 (211 aa).

2 disordered regions span residues 1–22 and 40–60; these read MSEP…AAAT and SCSA…LGDD. The span at 44-53 shows a compositional bias: low complexity; that stretch reads QQQQQQQQQQ. 4 consecutive EF-hand domains span residues 60 to 95, 96 to 131, 136 to 171, and 172 to 207; these read DQLG…LGLK, PSTD…ELLY, YSED…LGHA, and LTVK…AAFD. Residues Asp-73, Asn-75, Asp-77, Ser-79, Glu-84, Asp-109, Asn-111, Asn-113, Glu-120, Asp-149, Asp-151, Asn-153, Glu-160, Asp-185, Asp-187, Asp-189, Arg-191, and Glu-196 each contribute to the Ca(2+) site.

Functionally, potential calcium sensor. This is Probable calcium-binding protein CML11 (CML11) from Oryza sativa subsp. japonica (Rice).